A 1212-amino-acid polypeptide reads, in one-letter code: uncharacterized protein (1212 aa).

Residues methionine 1–tyrosine 31 show a composition bias toward polar residues. Disordered regions lie at residues methionine 1–glutamine 70, proline 119–asparagine 169, serine 211–asparagine 231, isoleucine 248–lysine 374, glutamine 655–glutamine 681, asparagine 935–alanine 957, and glutamine 973–glutamine 1125. Composition is skewed to low complexity over residues proline 48–glutamine 70 and proline 119–asparagine 163. Residues asparagine 256–asparagine 275 are compositionally biased toward low complexity. 2 stretches are compositionally biased toward polar residues: residues lysine 276–serine 285 and tyrosine 292–proline 317. Residues isoleucine 322–glutamine 340 are compositionally biased toward low complexity. A compositionally biased stretch (polar residues) spans threonine 341–histidine 351. Residues asparagine 352 to asparagine 373 show a composition bias toward low complexity. 2 stretches are compositionally biased toward low complexity: residues asparagine 998–asparagine 1022 and glutamine 1037–glutamine 1125.

This is an uncharacterized protein from Dictyostelium discoideum (Social amoeba).